The primary structure comprises 443 residues: Phosphoglucosamine mutase (443 aa).

Residue S101 is the Phosphoserine intermediate of the active site. Mg(2+) contacts are provided by S101, D239, D241, and D243. Phosphoserine is present on S101.

Belongs to the phosphohexose mutase family. Mg(2+) serves as cofactor. Post-translationally, activated by phosphorylation.

It catalyses the reaction alpha-D-glucosamine 1-phosphate = D-glucosamine 6-phosphate. Catalyzes the conversion of glucosamine-6-phosphate to glucosamine-1-phosphate. This Francisella philomiragia subsp. philomiragia (strain ATCC 25017 / CCUG 19701 / FSC 153 / O#319-036) protein is Phosphoglucosamine mutase.